Consider the following 266-residue polypeptide: 4-hydroxy-tetrahydrodipicolinate reductase (266 aa).

Residues 8-13 (GAAGRM) and Glu-33 each bind NAD(+). An NADP(+)-binding site is contributed by Arg-34. NAD(+) is bound by residues 97-99 (GST) and 121-124 (APNM). His-154 serves as the catalytic Proton donor/acceptor. His-155 is a binding site for (S)-2,3,4,5-tetrahydrodipicolinate. The active-site Proton donor is the Lys-158. Residue 164-165 (GT) coordinates (S)-2,3,4,5-tetrahydrodipicolinate.

This sequence belongs to the DapB family.

It is found in the cytoplasm. It catalyses the reaction (S)-2,3,4,5-tetrahydrodipicolinate + NAD(+) + H2O = (2S,4S)-4-hydroxy-2,3,4,5-tetrahydrodipicolinate + NADH + H(+). The enzyme catalyses (S)-2,3,4,5-tetrahydrodipicolinate + NADP(+) + H2O = (2S,4S)-4-hydroxy-2,3,4,5-tetrahydrodipicolinate + NADPH + H(+). The protein operates within amino-acid biosynthesis; L-lysine biosynthesis via DAP pathway; (S)-tetrahydrodipicolinate from L-aspartate: step 4/4. Catalyzes the conversion of 4-hydroxy-tetrahydrodipicolinate (HTPA) to tetrahydrodipicolinate. In Geobacter sulfurreducens (strain ATCC 51573 / DSM 12127 / PCA), this protein is 4-hydroxy-tetrahydrodipicolinate reductase.